We begin with the raw amino-acid sequence, 74 residues long: Large ribosomal subunit protein bL31 (74 aa).

Positions 17, 19, 38, and 41 each coordinate Zn(2+).

The protein belongs to the bacterial ribosomal protein bL31 family. Type A subfamily. As to quaternary structure, part of the 50S ribosomal subunit. Zn(2+) is required as a cofactor.

Its function is as follows. Binds the 23S rRNA. The chain is Large ribosomal subunit protein bL31 from Gloeobacter violaceus (strain ATCC 29082 / PCC 7421).